A 1523-amino-acid polypeptide reads, in one-letter code: WD repeat-containing protein 62 (1523 aa).

N-acetylalanine is present on A2. Residue S33 is modified to Phosphoserine. Residue T46 is modified to Phosphothreonine. 12 WD repeats span residues 109–150, 153–194, 196–234, 291–330, 357–396, 411–450, 490–529, 532–574, 578–618, 626–665, 671–713, and 714–752; these read TTRK…QVAE, GHKY…VVAS, KVSC…EAKV, INLK…YLTN, AVYP…EVSK, EVYP…DTRW, DMKA…ELIK, AHDA…NLEQ, DHSS…DGLH, AEKT…QKKC, GDEG…KMFG, and HSEI…TTCM. S501 carries the phosphoserine modification. Positions 762–824 are disordered; that stretch reads QEQQQQPKDQ…PSKDSLDPDP (63 aa). Residues 776–790 are compositionally biased toward polar residues; sequence PPSQETYASTPSEIR. Residues 797–809 are compositionally biased toward acidic residues; it reads QTEDEMEEECEPE. The WD 13 repeat unit spans residues 803–846; sequence EEECEPEELLKTPSKDSLDPDPRCLLTNGKLPLWAKRLLGDDDV. Positions 810–824 are enriched in basic and acidic residues; the sequence is ELLKTPSKDSLDPDP. Phosphoserine occurs at positions 966 and 972. The tract at residues 1000 to 1072 is disordered; the sequence is VSSVSSKDQS…GLGNGSLPQT (73 aa). At T1072 the chain carries Phosphothreonine. Phosphoserine occurs at positions 1117, 1143, and 1169. The disordered stretch occupies residues 1143 to 1258; sequence SPEAQPVGQG…SLHKPLSPGQ (116 aa). Polar residues-rich tracts occupy residues 1167 to 1177 and 1199 to 1213; these read YMSSDGTNVLS and TSVL…ISAP. Low complexity predominate over residues 1214 to 1225; the sequence is SSCSYLESTTSS. Over residues 1226 to 1235 the composition is skewed to polar residues; sequence HAKTTRSISL. The residue at position 1234 (S1234) is a Phosphoserine.

In terms of assembly, can form homodimers (via C-terminus). Interacts (via C-terminus) with MAPKBP1 (via C-terminus). Interacts with CDK5RAP2, CEP152, CEP63 and KIAA0753. CEP63, CDK5RAP2, CEP152, WDR62 are proposed to form a stepwise assembled complex at the centrosome forming a ring near parental centrioles. Prominent in neural crest lineages from 9.5 dpc to 11.5 dpc. Also expressed in the ventricular and subventricular zones during the period of cerebral cortical neurogenesis (11.5-16.5 dpc), with expression decreasing in intensity by 17.5 dpc. In the cerebellum, it is strongly expressed in precursors of granule neurons at late embryonic and early postnatal stages; by postnatal day 9 (P9). Present in fetal brain, enriched within the ventricular and subventricular zone (at protein level).

It is found in the nucleus. Its subcellular location is the cytoplasm. The protein resides in the cytoskeleton. It localises to the spindle pole. The protein localises to the microtubule organizing center. It is found in the centrosome. Its subcellular location is the centriole. Functionally, required for cerebral cortical development. Plays a role in neuronal proliferation and migration. Plays a role in mother-centriole-dependent centriole duplication; the function seems also to involve CEP152, CDK5RAP2 and CEP63 through a stepwise assembled complex at the centrosome that recruits CDK2 required for centriole duplication. In Mus musculus (Mouse), this protein is WD repeat-containing protein 62 (Wdr62).